The chain runs to 537 residues: 6-phosphogluconate dehydrogenase, decarboxylating 2, chloroplastic (537 aa).

The N-terminal 44 residues, 1–44 (MRSEVPSSTSPSFLSPPFIHLPLLSLSSPTPLPHSSSSTFSLFS), are a transit peptide targeting the chloroplast. NADP(+) contacts are provided by residues 55 to 60 (GLAVMG), 78 to 80 (NRT), 122 to 124 (VKA), and asparagine 150. Substrate is bound by residues asparagine 150 and 176 to 178 (SGG). Residue lysine 230 is the Proton acceptor of the active site. Residue 233–234 (HN) participates in substrate binding. Catalysis depends on glutamate 237, which acts as the Proton donor. Substrate is bound by residues tyrosine 238, lysine 308, arginine 335, arginine 500, and histidine 506.

The protein belongs to the 6-phosphogluconate dehydrogenase family. As to quaternary structure, homodimer.

It localises to the plastid. It is found in the chloroplast. The enzyme catalyses 6-phospho-D-gluconate + NADP(+) = D-ribulose 5-phosphate + CO2 + NADPH. Its pathway is carbohydrate degradation; pentose phosphate pathway; D-ribulose 5-phosphate from D-glucose 6-phosphate (oxidative stage): step 3/3. Catalyzes the oxidative decarboxylation of 6-phosphogluconate to ribulose 5-phosphate and CO(2), with concomitant reduction of NADP to NADPH. This is 6-phosphogluconate dehydrogenase, decarboxylating 2, chloroplastic from Spinacia oleracea (Spinach).